The chain runs to 46 residues: Sperm protamine P1 (46 aa).

This sequence belongs to the protamine P1 family. In terms of tissue distribution, testis.

Its subcellular location is the nucleus. It is found in the chromosome. In terms of biological role, protamines substitute for histones in the chromatin of sperm during the haploid phase of spermatogenesis. They compact sperm DNA into a highly condensed, stable and inactive complex. In Glauconycteris beatrix (Beatrix's bat), this protein is Sperm protamine P1 (PRM1).